The primary structure comprises 150 residues: Putative pre-16S rRNA nuclease (150 aa).

It belongs to the YqgF nuclease family.

It is found in the cytoplasm. Functionally, could be a nuclease involved in processing of the 5'-end of pre-16S rRNA. The polypeptide is Putative pre-16S rRNA nuclease (Chlamydia abortus (strain DSM 27085 / S26/3) (Chlamydophila abortus)).